A 292-amino-acid chain; its full sequence is tRNA pseudouridine synthase B (292 aa).

Catalysis depends on D38, which acts as the Nucleophile.

Belongs to the pseudouridine synthase TruB family. Type 1 subfamily.

It carries out the reaction uridine(55) in tRNA = pseudouridine(55) in tRNA. Its function is as follows. Responsible for synthesis of pseudouridine from uracil-55 in the psi GC loop of transfer RNAs. This chain is tRNA pseudouridine synthase B, found in Gloeobacter violaceus (strain ATCC 29082 / PCC 7421).